The following is a 129-amino-acid chain: MSFGLVGTVNNNGWKSPFRHETKYRAGYDKFKYYKTHYRGAKKAGTNDDRWRWTAWFDLDFAHQKIVLIERGELHRQADLKKSDPATNETSKTVWGSIKEKLLQNVNNLHSEKGVFLWFRQSGFTTTRN.

This sequence to M.pneumoniae MPN_376 N-terminal region.

This is an uncharacterized protein from Mycoplasma pneumoniae (strain ATCC 29342 / M129 / Subtype 1) (Mycoplasmoides pneumoniae).